Reading from the N-terminus, the 202-residue chain is FMN-dependent NADH:quinone oxidoreductase 1 (202 aa).

FMN is bound by residues serine 9, 15–17 (SAS), 95–98 (MYNF), and 139–142 (TSGG).

Belongs to the azoreductase type 1 family. Homodimer. Requires FMN as cofactor.

It catalyses the reaction 2 a quinone + NADH + H(+) = 2 a 1,4-benzosemiquinone + NAD(+). It carries out the reaction N,N-dimethyl-1,4-phenylenediamine + anthranilate + 2 NAD(+) = 2-(4-dimethylaminophenyl)diazenylbenzoate + 2 NADH + 2 H(+). Functionally, quinone reductase that provides resistance to thiol-specific stress caused by electrophilic quinones. Also exhibits azoreductase activity. Catalyzes the reductive cleavage of the azo bond in aromatic azo compounds to the corresponding amines. This is FMN-dependent NADH:quinone oxidoreductase 1 from Pseudomonas syringae pv. tomato (strain ATCC BAA-871 / DC3000).